The sequence spans 310 residues: CCR4-NOT transcription complex subunit 7 (310 aa).

A divalent metal cation is bound by residues D51, E53, D172, and D245.

This sequence belongs to the CAF1 family. Component of the CCR4-NOT complex at least composed of ccf-1, ccr-4 and let-711, which is required for germ cell development in hermaphrodites. Within the complex interacts with let-711. In terms of tissue distribution, highly expressed in the germline. In particular, highly expressed in germ cells that enter meiosis and progress through the pachytene stage.

It is found in the nucleus. It localises to the cytoplasm. The catalysed reaction is Exonucleolytic cleavage of poly(A) to 5'-AMP.. Catalytic component of the CCR4-NOT complex which is one of the major cellular mRNA deadenylases and is linked to various cellular processes including bulk mRNA degradation, miRNA-mediated repression, translational repression during translational initiation and general transcription regulation. Within the complex, plays a role in miRNA-mediated deadenylation in embryos. Within the complex promotes germ cell development and fertility in hermaphrodites. Additional complex functions may be a consequence of its influence on mRNA expression. In Caenorhabditis elegans, this protein is CCR4-NOT transcription complex subunit 7.